Reading from the N-terminus, the 266-residue chain is Tryptophan synthase alpha chain (266 aa).

Residues glutamate 49 and aspartate 60 each act as proton acceptor in the active site.

Belongs to the TrpA family. In terms of assembly, tetramer of two alpha and two beta chains.

It catalyses the reaction (1S,2R)-1-C-(indol-3-yl)glycerol 3-phosphate + L-serine = D-glyceraldehyde 3-phosphate + L-tryptophan + H2O. It functions in the pathway amino-acid biosynthesis; L-tryptophan biosynthesis; L-tryptophan from chorismate: step 5/5. Functionally, the alpha subunit is responsible for the aldol cleavage of indoleglycerol phosphate to indole and glyceraldehyde 3-phosphate. The protein is Tryptophan synthase alpha chain of Thioalkalivibrio sulfidiphilus (strain HL-EbGR7).